A 1132-amino-acid polypeptide reads, in one-letter code: MATSNHKKQYTTLSDIDHVLLRPEVIIGSTVPMEQTEYVVDENFSEILEKQVFVSEALIRIFVEVLANAVDNIHRSKGSSTPCKSIKIKIEDDGTTMIHNDGQVIKISKEENDGIEINGKKCSVYNHELVFGHLRSSSNYDDTVVRQTSGKNGLGVKCTNILSKSFKVIGVDPENKKKFVQEWTNNMKETSGPKVTTSSSKTGYTEVIYCPDFERLGNFSSDIIGIFRKHVLDVAMLASSEGVSVYFNDKKLPIKKFSDYTKLFKLEKESISITEEDGSSEVTIAFVERDGKKKPISFVNGLFTKHGGQHVDGWTKPFFANLLSVLNKPSKTYKDLKLSLKDVTPYFRFFVKSTVDKPQFDCQNKNMLKSPCLKYTIPDKIITKVCKWTSVQELKQSSFEKLLKGKDNNIIKTLNDKKRRPKVSVKEYDPANKAGTTLSEKCTLIVCEGLSAKTYAVAGISTGISFTGTDTKKGRDWFGILPLRGKFLNVRNANNDKMIKNTVVTDLVNAMGLTFGMDYSTQKSRKSLNYGSIIIIPDPDEDGIHIEGLVLNFFHHHFSSLFNPVVPNLKDFPFISSMKIPIIKVIEKPLKGRREIEFFTHEAFHKFKNENKWHKNHEIKYFKGLGTTKHEDVPKIFGKKMVVFNIDDNAHENMEKAFKDEEADERKEWLKQYNPNARTFDLDSPNKILQLNISTFINEELIKFSIEDCKRSLPHLIDGLKESQRKVIFGLKQWNGKNNIKVAQLGAFVAQKTDYKHGEQNLFDTIIKMAQTFVGANNIPLLEEDGQFGTRLSGGKDAASPRYIFVNQPPILNKIFRPEDDPILNYTLDGEPVFYAPVIPLICINGSVGVGTGFSCNIPMFNPSEIIDGLKQWINMREQGEKYVFKYKPWYKGFTGKIEKNGSGRYISYGTLSNEASNNGMYQYTVSELPINMWTDKFKEMCDQYRESNLIKTCDNYSEVTTVNFKISSEHELTIENLKLRSYIHTSNMVMFDHEGKIHKYETLNGIMQRFCKERIKIYEKRRQYMLQKLNKSLTISENKKRFMEDVMNQKIKILLQEDEVVHQQLLDMNYYKDDEGEFDYLLNMNIGGFRKKNVDKLISKIDDLKKDIMWYTNTNEGQMWLKDILELEPFI.

ATP is bound by residues N68, N100, S137–N139, and G150–K157. The segment at N327–P329 is interaction with DNA. An ATP-binding site is contributed by Q363–K365. Residues C442–S577 enclose the Toprim domain. Residues E448, D538, and D540 each coordinate Mg(2+). In terms of domain architecture, Topo IIA-type catalytic spans L713–I1125. Y803 (O-(5'-phospho-DNA)-tyrosine intermediate) is an active-site residue. Positions K979–N988 are interaction with DNA.

This sequence belongs to the type II topoisomerase family. Requires Mg(2+) as cofactor. It depends on Mn(2+) as a cofactor. Ca(2+) is required as a cofactor.

The catalysed reaction is ATP-dependent breakage, passage and rejoining of double-stranded DNA.. Functionally, can introduce negative superhelical turns into double-stranded circular DNA. This is DNA topoisomerase 2 (TOP2) from Acheta domesticus (House cricket).